Reading from the N-terminus, the 364-residue chain is Chorismate synthase (364 aa).

An NADP(+)-binding site is contributed by R47. Residues 125–127 (RAS), G288, 303–307 (KPTAT), and R329 contribute to the FMN site.

The protein belongs to the chorismate synthase family. Homotetramer. Requires FMNH2 as cofactor.

It carries out the reaction 5-O-(1-carboxyvinyl)-3-phosphoshikimate = chorismate + phosphate. The protein operates within metabolic intermediate biosynthesis; chorismate biosynthesis; chorismate from D-erythrose 4-phosphate and phosphoenolpyruvate: step 7/7. Functionally, catalyzes the anti-1,4-elimination of the C-3 phosphate and the C-6 proR hydrogen from 5-enolpyruvylshikimate-3-phosphate (EPSP) to yield chorismate, which is the branch point compound that serves as the starting substrate for the three terminal pathways of aromatic amino acid biosynthesis. This reaction introduces a second double bond into the aromatic ring system. This chain is Chorismate synthase, found in Synechococcus sp. (strain CC9605).